Consider the following 383-residue polypeptide: Probable aspartate/prephenate aminotransferase (383 aa).

Positions 39, 125, and 175 each coordinate L-aspartate. Lysine 234 carries the N6-(pyridoxal phosphate)lysine modification. Arginine 361 provides a ligand contact to L-aspartate.

It belongs to the class-I pyridoxal-phosphate-dependent aminotransferase family. As to quaternary structure, homodimer. It depends on pyridoxal 5'-phosphate as a cofactor.

The protein resides in the cytoplasm. The enzyme catalyses L-aspartate + 2-oxoglutarate = oxaloacetate + L-glutamate. It carries out the reaction L-arogenate + oxaloacetate = prephenate + L-aspartate. Its function is as follows. Catalyzes the reversible conversion of aspartate and 2-oxoglutarate to glutamate and oxaloacetate. Can also transaminate prephenate in the presence of aspartate. The protein is Probable aspartate/prephenate aminotransferase (aspC) of Thermus aquaticus.